The following is a 60-amino-acid chain: Ribosome biogenesis protein Nop10 (60 aa).

Positions 29–60 are disordered; it reads CDGPTENSAPAPFSPEDPYGEYRRRVRRRASE.

It belongs to the NOP10 family.

Functionally, involved in ribosome biogenesis; more specifically in 18S rRNA pseudouridylation and in cleavage of pre-rRNA. This Halorubrum lacusprofundi (strain ATCC 49239 / DSM 5036 / JCM 8891 / ACAM 34) protein is Ribosome biogenesis protein Nop10.